A 103-amino-acid polypeptide reads, in one-letter code: Large ribosomal subunit protein bL21 (103 aa).

Belongs to the bacterial ribosomal protein bL21 family. In terms of assembly, part of the 50S ribosomal subunit. Contacts protein L20.

Its function is as follows. This protein binds to 23S rRNA in the presence of protein L20. In Aliivibrio fischeri (strain ATCC 700601 / ES114) (Vibrio fischeri), this protein is Large ribosomal subunit protein bL21.